Reading from the N-terminus, the 125-residue chain is Ixonnexin (125 aa).

The N-terminal stretch at 1-21 is a signal peptide; that stretch reads MGLTGTTLVLVCVAFFGSAAA. N-linked (GlcNAc...) asparagine glycosylation occurs at N26. The disordered stretch occupies residues 81–125; that stretch reads TSSGGPDDTGDNTPPPTEKPKQKKKKPKKTKKPKRKSKKDQKENF. Over residues 101-119 the composition is skewed to basic residues; the sequence is KQKKKKPKKTKKPKRKSKK.

Belongs to the salp14 family. In terms of assembly, homodimer. Interacts with host PLG. Interacts with host PLAT. In terms of tissue distribution, saliva (at protein level).

Its subcellular location is the secreted. In terms of biological role, salivary protein that promotes host fibrinolysis via accelerating host plasmin generation from plasminogen (PLG) initiated by tPA/tissue-type plasminogen activator (PLAT). Does not affect urokinase (PLAU)-mediated fibrinolysis in the host. Enhances amidolytic activity of host coagulation factor Xa (F10). The polypeptide is Ixonnexin (Ixodes scapularis (Black-legged tick)).